A 178-amino-acid chain; its full sequence is Extracellular fatty acid-binding protein (178 aa).

The N-terminal stretch at 1 to 20 is a signal peptide; that stretch reads MRTLALSLALALLCLLHTEA. Ala21 carries the blocked amino end (Ala) modification. Thr43 lines the enterobactin pocket. Positions 72 and 104 each coordinate 1-tetradecanoyl-sn-glycerol 3-phosphate. A disulfide bridge links Cys80 with Cys173. The enterobactin site is built by Lys104, Arg123, and Arg134. 1-tetradecanoyl-sn-glycerol 3-phosphate is bound at residue 134-136; the sequence is RLY.

Belongs to the calycin superfamily. Lipocalin family. Monomer. Post-translationally, does not seem to be glycosylated. Expressed in egg white (at protein level). Expressed in the magnum of the oviduct (at protein level). Preferentially synthesized in nonproliferating cells.

Its subcellular location is the secreted. Functionally, siderocalin-like lipocalin tightly binding a variety of bacterial ferric siderophores, also binds long-chain unsaturated fatty acids such as linoleic acid, oleic acid, arachidonic acid and, with a lower affinity, long chain saturated fatty acids such as steraic acid. May act as an antibacterial factor, through dual ligand specificity, both as a siderophore-sequestrating molecule and a lysophosphatidic acid (LPA) sensor. The sequence is that of Extracellular fatty acid-binding protein (EXFABP) from Gallus gallus (Chicken).